The following is a 969-amino-acid chain: Protein translocase subunit SecA (969 aa).

ATP-binding positions include Q99, 117 to 121 (GEGKT), and D631.

This sequence belongs to the SecA family. Monomer and homodimer. Part of the essential Sec protein translocation apparatus which comprises SecA, SecYEG and auxiliary proteins SecDF. Other proteins may also be involved.

Its subcellular location is the cell inner membrane. It is found in the cytoplasm. The catalysed reaction is ATP + H2O + cellular proteinSide 1 = ADP + phosphate + cellular proteinSide 2.. Functionally, part of the Sec protein translocase complex. Interacts with the SecYEG preprotein conducting channel. Has a central role in coupling the hydrolysis of ATP to the transfer of proteins into and across the cell membrane, serving as an ATP-driven molecular motor driving the stepwise translocation of polypeptide chains across the membrane. The sequence is that of Protein translocase subunit SecA from Chlamydia felis (strain Fe/C-56) (Chlamydophila felis).